We begin with the raw amino-acid sequence, 259 residues long: MADS-box protein ZMM17 (259 aa).

One can recognise an MADS-box domain in the interval 1–61 (MGRGKIEIKR…GKMFEYCSPA (61 aa)). One can recognise a K-box domain in the interval 85–175 (DQQILLEMTR…YRMINENQQA (91 aa)). Residues 237–259 (PTQPNLQDPAAPCGGLHGHGLQL) are disordered.

Strong expression in female inflorescences (ears), but also weak expression in male inflorescences (tassels). At early stages of the development of the female spiklet, expressed in all organ primordia but later restricted to the ovule and the developing silk. At very late stages of development, expression becomes restricted to parts of the silk.

The protein resides in the nucleus. Probable transcription factor. This Zea mays (Maize) protein is MADS-box protein ZMM17 (M17).